The primary structure comprises 100 residues: NADH-quinone oxidoreductase subunit K (100 aa).

3 helical membrane passes run 4-24 (LQHGLILAAILFILGLTGLVI), 28-48 (LLFMLIGLEIMINASALAFVV), and 60-80 (VMYILAISLAAAEASIGLALL).

It belongs to the complex I subunit 4L family. As to quaternary structure, NDH-1 is composed of 13 different subunits. Subunits NuoA, H, J, K, L, M, N constitute the membrane sector of the complex.

It is found in the cell inner membrane. It carries out the reaction a quinone + NADH + 5 H(+)(in) = a quinol + NAD(+) + 4 H(+)(out). In terms of biological role, NDH-1 shuttles electrons from NADH, via FMN and iron-sulfur (Fe-S) centers, to quinones in the respiratory chain. The immediate electron acceptor for the enzyme in this species is believed to be ubiquinone. Couples the redox reaction to proton translocation (for every two electrons transferred, four hydrogen ions are translocated across the cytoplasmic membrane), and thus conserves the redox energy in a proton gradient. This chain is NADH-quinone oxidoreductase subunit K, found in Shigella sonnei (strain Ss046).